Here is a 290-residue protein sequence, read N- to C-terminus: Protein MGF 110-9L (290 aa).

3 helical membrane-spanning segments follow: residues 1–19, 128–148, and 163–183; these read MKVI…VIQN, VENI…MVYI, and LLIF…IIMN. Asn242 and Asn267 each carry an N-linked (GlcNAc...) asparagine; by host glycan.

Belongs to the asfivirus MGF 110 family.

The protein localises to the host membrane. Functionally, plays a role in virus cell tropism, and may be required for efficient virus replication in macrophages. The sequence is that of Protein MGF 110-9L from Ornithodoros (relapsing fever ticks).